We begin with the raw amino-acid sequence, 183 residues long: Large ribosomal subunit protein uL6 (183 aa).

Belongs to the universal ribosomal protein uL6 family. In terms of assembly, part of the 50S ribosomal subunit.

This protein binds to the 23S rRNA, and is important in its secondary structure. It is located near the subunit interface in the base of the L7/L12 stalk, and near the tRNA binding site of the peptidyltransferase center. The chain is Large ribosomal subunit protein uL6 from Chlamydia trachomatis serovar L2 (strain ATCC VR-902B / DSM 19102 / 434/Bu).